Here is a 714-residue protein sequence, read N- to C-terminus: Phenylalanine 2-monooxygenase precursor (714 aa).

Positions 1–15 (MGVTVIPRLLGLKDE) are cleaved as a propeptide — removed in mature form; occupies the channel of the substrate amino acid from the outside of the protein to the interior flavin ring in the precursor. FAD is bound by residues G2, G68, and 95–96 (EA). Positions 108-109 (IK) are cleaved as a propeptide — linker peptide. FAD is bound by residues R120, 141–144 (GAMR), and V375. A substrate-binding site is contributed by R144. Y537 provides a ligand contact to substrate. FAD is bound by residues 652 to 653 (SD) and 660 to 662 (GWL). G660 provides a ligand contact to substrate.

Belongs to the phenylalanine 2-monooxygenase family. As to quaternary structure, heterotetramer composed of 2 alpha and 2 beta subunits. FAD serves as cofactor. In terms of processing, proteolytically cleaved to yield the active enzyme. Cleavage of the linkage between the 2 subunits causes reshaping of the oxygen channel and the hydrophobic environment around the flavin ring. Removal of the prosequence causes opening of the amino acid channel.

The catalysed reaction is L-phenylalanine + O2 = 2-phenylacetamide + CO2 + H2O. In terms of biological role, catalyzes both oxygenative decarboxylation and oxidative deamination, depending on the substrate used. Has high activity for L-Phe and L-Tyr, but relatively low activities for L-Met and L-Trp. L-Phe is mainly oxygenated and L-Met is mainly oxidized. In Pseudomonas sp, this protein is Phenylalanine 2-monooxygenase precursor.